The sequence spans 133 residues: ATP synthase epsilon chain (133 aa).

It belongs to the ATPase epsilon chain family. As to quaternary structure, F-type ATPases have 2 components, CF(1) - the catalytic core - and CF(0) - the membrane proton channel. CF(1) has five subunits: alpha(3), beta(3), gamma(1), delta(1), epsilon(1). CF(0) has three main subunits: a, b and c.

It is found in the cell inner membrane. Its function is as follows. Produces ATP from ADP in the presence of a proton gradient across the membrane. The protein is ATP synthase epsilon chain of Paramagnetospirillum magneticum (strain ATCC 700264 / AMB-1) (Magnetospirillum magneticum).